Consider the following 254-residue polypeptide: Probable triosephosphate isomerase 2 (254 aa).

9–11 (NMK) lines the substrate pocket. The Electrophile role is filled by H96. E168 functions as the Proton acceptor in the catalytic mechanism. Substrate contacts are provided by G174 and S212.

It belongs to the triosephosphate isomerase family. Homodimer.

It localises to the cytoplasm. The enzyme catalyses D-glyceraldehyde 3-phosphate = dihydroxyacetone phosphate. It functions in the pathway carbohydrate biosynthesis; gluconeogenesis. Its pathway is carbohydrate degradation; glycolysis; D-glyceraldehyde 3-phosphate from glycerone phosphate: step 1/1. Functionally, involved in the gluconeogenesis. Catalyzes stereospecifically the conversion of dihydroxyacetone phosphate (DHAP) to D-glyceraldehyde-3-phosphate (G3P). This is Probable triosephosphate isomerase 2 from Listeria monocytogenes serovar 1/2a (strain ATCC BAA-679 / EGD-e).